The sequence spans 1368 residues: DNA-directed RNA polymerase subunit beta (1368 aa).

The protein belongs to the RNA polymerase beta chain family. The RNAP catalytic core consists of 2 alpha, 1 beta, 1 beta' and 1 omega subunit. When a sigma factor is associated with the core the holoenzyme is formed, which can initiate transcription.

The enzyme catalyses RNA(n) + a ribonucleoside 5'-triphosphate = RNA(n+1) + diphosphate. DNA-dependent RNA polymerase catalyzes the transcription of DNA into RNA using the four ribonucleoside triphosphates as substrates. This Burkholderia cenocepacia (strain ATCC BAA-245 / DSM 16553 / LMG 16656 / NCTC 13227 / J2315 / CF5610) (Burkholderia cepacia (strain J2315)) protein is DNA-directed RNA polymerase subunit beta.